The chain runs to 281 residues: Phosphatidylglycerol--prolipoprotein diacylglyceryl transferase (281 aa).

3 consecutive transmembrane segments (helical) span residues 11-31 (IIFTIGPVSARWYGFMYVISF), 57-77 (LLYSIFLGSCIGGRIGYIIFY), and 89-109 (VFYIWEGGMSFHGGLIGAIIV). An a 1,2-diacyl-sn-glycero-3-phospho-(1'-sn-glycerol)-binding site is contributed by Arg-140. 3 helical membrane passes run 194-214 (PTQLYEFFLEGILLFFIIYFF), 222-242 (GSISGLFLIFYGLFRIFIEFF), and 255-275 (IITMGQILSLPMIIAGLIIMY).

Belongs to the Lgt family.

The protein localises to the cell inner membrane. It carries out the reaction L-cysteinyl-[prolipoprotein] + a 1,2-diacyl-sn-glycero-3-phospho-(1'-sn-glycerol) = an S-1,2-diacyl-sn-glyceryl-L-cysteinyl-[prolipoprotein] + sn-glycerol 1-phosphate + H(+). Its pathway is protein modification; lipoprotein biosynthesis (diacylglyceryl transfer). Catalyzes the transfer of the diacylglyceryl group from phosphatidylglycerol to the sulfhydryl group of the N-terminal cysteine of a prolipoprotein, the first step in the formation of mature lipoproteins. This chain is Phosphatidylglycerol--prolipoprotein diacylglyceryl transferase, found in Buchnera aphidicola subsp. Acyrthosiphon pisum (strain APS) (Acyrthosiphon pisum symbiotic bacterium).